The chain runs to 539 residues: Chaperone Ric-8A (539 aa).

Residues 506–539 form a disordered region; it reads PMGVTSDGRLGPLDEAAQKMLQRQESSDLDSDSD.

This sequence belongs to the synembryn family.

The protein localises to the cytoplasm. Its subcellular location is the cell cortex. Its function is as follows. Chaperone that specifically binds and folds nascent G alpha proteins prior to G protein heterotrimer formation, promoting their stability and activity: folds GNAI1, GNAO1, GNA13 and GNAQ. Does not fold G(s) G-alpha proteins GNAS nor GNAL. Also acts as a guanine nucleotide exchange factor (GEF) for G alpha proteins by stimulating exchange of bound GDP for free GTP. The polypeptide is Chaperone Ric-8A (ric8a) (Xenopus laevis (African clawed frog)).